Here is a 345-residue protein sequence, read N- to C-terminus: Centromere protein L (345 aa).

Phosphoserine is present on residues serine 40 and serine 54.

It belongs to the CENP-L/IML3 family. As to quaternary structure, component of the CENPA-CAD complex, composed of CENPI, CENPK, CENPL, CENPO, CENPP, CENPQ, CENPR and CENPS. The CENPA-CAD complex interacts with the CENPA-NAC complex, at least composed of CENPA, CENPC, CENPH, CENPM, CENPN, CENPT and CENPU.

The protein localises to the nucleus. It localises to the chromosome. The protein resides in the centromere. Component of the CENPA-CAD (nucleosome distal) complex, a complex recruited to centromeres which is involved in assembly of kinetochore proteins, mitotic progression and chromosome segregation. May be involved in incorporation of newly synthesized CENPA into centromeres via its interaction with the CENPA-NAC complex. The sequence is that of Centromere protein L (Cenpl) from Rattus norvegicus (Rat).